The primary structure comprises 152 residues: NADH-quinone oxidoreductase subunit I 1 (152 aa).

4Fe-4S ferredoxin-type domains are found at residues Met-53–Asp-83 and Val-94–Gly-123. Positions 63, 66, 69, 73, 103, 106, 109, and 113 each coordinate [4Fe-4S] cluster.

The protein belongs to the complex I 23 kDa subunit family. As to quaternary structure, NDH-1 is composed of 14 different subunits. Subunits NuoA, H, J, K, L, M, N constitute the membrane sector of the complex. It depends on [4Fe-4S] cluster as a cofactor.

It localises to the cell inner membrane. The enzyme catalyses a quinone + NADH + 5 H(+)(in) = a quinol + NAD(+) + 4 H(+)(out). NDH-1 shuttles electrons from NADH, via FMN and iron-sulfur (Fe-S) centers, to quinones in the respiratory chain. The immediate electron acceptor for the enzyme in this species is believed to be ubiquinone. Couples the redox reaction to proton translocation (for every two electrons transferred, four hydrogen ions are translocated across the cytoplasmic membrane), and thus conserves the redox energy in a proton gradient. This chain is NADH-quinone oxidoreductase subunit I 1, found in Koribacter versatilis (strain Ellin345).